The chain runs to 487 residues: MYLQELLKGIQVEKIIGNMDIDIEDIYFDSRFVTQKSLFICIEGFKTTGSLYINEAIQRGAVAILSEKEIAIEGTTTIKVENSRKALAAVASRFYKFPTNTLKLVGVTGTNGKTSITYMVKSILGYYNINVGLIGTISNWIGNKEIEAVRTTPESLELQKILNEMVEQKVDTCVMEVSSHALELGRVDHTKFTMGIFTNLTPEHLDFHEDMDHYRNAKKKLFYKTTLCNIINVDDIHGKMIAEELKEEQIPLITFGMNQQADVYATDLKINLKGVSFQLHMGQDSKEFHVKIPGLFTVYNAMPSILICYILGLSLEEISIALEAMKGVPGRFEVVEEIQRNSVIIDYAHTPDALENILISTRKFAPKRIITVFGCGGDRDKTKRRIMGEISGKYSDYSIITSDNPRTEEPLKIIEMIEDGIKQVTDQYKIMIDRRCAIEYAMKIAEEKDIIILAGKGHEKTQVIGNEVFYFDDREVALEIARKEGLI.

Ser30 is a UDP-N-acetyl-alpha-D-muramoyl-L-alanyl-D-glutamate binding site. 109–115 lines the ATP pocket; sequence GTNGKTS. Residues 151 to 152, Ser178, and Arg186 contribute to the UDP-N-acetyl-alpha-D-muramoyl-L-alanyl-D-glutamate site; that span reads TT. The residue at position 218 (Lys218) is an N6-carboxylysine. Meso-2,6-diaminopimelate-binding positions include Arg379, 403-406, Gly455, and Glu459; that span reads DNPR. Residues 403-406 carry the Meso-diaminopimelate recognition motif motif; that stretch reads DNPR.

This sequence belongs to the MurCDEF family. MurE subfamily. It depends on Mg(2+) as a cofactor. In terms of processing, carboxylation is probably crucial for Mg(2+) binding and, consequently, for the gamma-phosphate positioning of ATP.

It is found in the cytoplasm. The catalysed reaction is UDP-N-acetyl-alpha-D-muramoyl-L-alanyl-D-glutamate + meso-2,6-diaminopimelate + ATP = UDP-N-acetyl-alpha-D-muramoyl-L-alanyl-gamma-D-glutamyl-meso-2,6-diaminopimelate + ADP + phosphate + H(+). It functions in the pathway cell wall biogenesis; peptidoglycan biosynthesis. Functionally, catalyzes the addition of meso-diaminopimelic acid to the nucleotide precursor UDP-N-acetylmuramoyl-L-alanyl-D-glutamate (UMAG) in the biosynthesis of bacterial cell-wall peptidoglycan. The polypeptide is UDP-N-acetylmuramoyl-L-alanyl-D-glutamate--2,6-diaminopimelate ligase (Alkaliphilus oremlandii (strain OhILAs) (Clostridium oremlandii (strain OhILAs))).